The chain runs to 394 residues: Mucosal addressin cell adhesion molecule 1 (394 aa).

The N-terminal stretch at 1–19 (MEPILALLLALGPFQLSRG) is a signal peptide. 3 Ig-like domains span residues 20-107 (QSFQ…ILVY), 108-225 (AFPD…TSPE), and 256-345 (PSTP…YVTG). The Extracellular segment spans residues 20-353 (QSFQVNPPEP…TGQVIPNPSS (334 aa)). N42 carries N-linked (GlcNAc...) asparagine glycosylation. 3 cysteine pairs are disulfide-bonded: C43–C89, C47–C93, and C130–C198. The interval 219 to 255 (QSQTSPEPPSTTSAKPYILTSSHTTKAVSTGLSSVAL) is mucin-like. A disulfide bridge connects residues C282 and C330. A helical membrane pass occupies residues 354–374 (MVALWIGSLVLGLLALAFLAY). Over 375 to 394 (CLWKRYRPGPLPDSSSCTLL) the chain is Cytoplasmic.

In terms of assembly, homodimer. Detected in Peyer patches and mesenteric lymph nodes but not in spleen.

It localises to the membrane. In terms of biological role, cell adhesion leukocyte receptor expressed by mucosal venules, helps to direct lymphocyte traffic into mucosal tissues including the Peyer patches and the intestinal lamina propria. It can bind both the integrin alpha-4/beta-7 and L-selectin, regulating both the passage and retention of leukocytes. The protein is Mucosal addressin cell adhesion molecule 1 (Madcam1) of Rattus norvegicus (Rat).